A 402-amino-acid chain; its full sequence is Dihydrolipoyllysine-residue acetyltransferase component of pyruvate dehydrogenase complex (402 aa).

Residues 1 to 69 (MPDIGLEEVE…KTSSIIMIFK (69 aa)) form the Lipoyl-binding domain. At Lys35 the chain carries N6-lipoyllysine. Residues 109–146 (HATPVVRRLARHLNVDLKNITPSGPKNRILKEDIELYI) form the Peripheral subunit-binding (PSBD) domain. His375 is a catalytic residue.

The protein belongs to the 2-oxoacid dehydrogenase family. As to quaternary structure, forms a 24-polypeptide structural core with octahedral symmetry. The cofactor is (R)-lipoate.

The enzyme catalyses N(6)-[(R)-dihydrolipoyl]-L-lysyl-[protein] + acetyl-CoA = N(6)-[(R)-S(8)-acetyldihydrolipoyl]-L-lysyl-[protein] + CoA. The pyruvate dehydrogenase complex catalyzes the overall conversion of pyruvate to acetyl-CoA and CO(2). It contains multiple copies of three enzymatic components: pyruvate dehydrogenase (E1), dihydrolipoamide acetyltransferase (E2) and lipoamide dehydrogenase (E3). The polypeptide is Dihydrolipoyllysine-residue acetyltransferase component of pyruvate dehydrogenase complex (aceF) (Buchnera aphidicola subsp. Schizaphis graminum (strain Sg)).